Consider the following 215-residue polypeptide: Adenylate kinase (215 aa).

10–15 (GAGKGT) is an ATP binding site. Positions 30–59 (STGDMLRAAVKAGSPLGLKVKGVMDSGGLV) are NMP. Residues Thr31, Arg36, 57-59 (GLV), 85-88 (GFPR), and Gln92 contribute to the AMP site. Residues 122 to 159 (GRRVHAASGRVYHDLHNPPKVAGKDDETGEDLIQREDD) are LID. ATP-binding positions include Arg123 and 132-133 (VY). Residues Arg156 and Arg167 each coordinate AMP. ATP is bound at residue Gly201.

The protein belongs to the adenylate kinase family. In terms of assembly, monomer.

Its subcellular location is the cytoplasm. The enzyme catalyses AMP + ATP = 2 ADP. It functions in the pathway purine metabolism; AMP biosynthesis via salvage pathway; AMP from ADP: step 1/1. Catalyzes the reversible transfer of the terminal phosphate group between ATP and AMP. Plays an important role in cellular energy homeostasis and in adenine nucleotide metabolism. This is Adenylate kinase from Azotobacter vinelandii (strain DJ / ATCC BAA-1303).